Consider the following 196-residue polypeptide: uncharacterized protein (196 aa).

Residues 1–21 (MQPEVEPLISPNLGAPGSHRE) are disordered.

This is an uncharacterized protein from Mus musculus (Mouse).